Reading from the N-terminus, the 159-residue chain is Ribosomal RNA large subunit methyltransferase H (159 aa).

S-adenosyl-L-methionine is bound by residues L76, G108, and 127–132 (FSKMTF).

This sequence belongs to the RNA methyltransferase RlmH family. In terms of assembly, homodimer.

It localises to the cytoplasm. It carries out the reaction pseudouridine(1915) in 23S rRNA + S-adenosyl-L-methionine = N(3)-methylpseudouridine(1915) in 23S rRNA + S-adenosyl-L-homocysteine + H(+). Its function is as follows. Specifically methylates the pseudouridine at position 1915 (m3Psi1915) in 23S rRNA. The chain is Ribosomal RNA large subunit methyltransferase H from Bifidobacterium longum subsp. infantis (strain ATCC 15697 / DSM 20088 / JCM 1222 / NCTC 11817 / S12).